A 507-amino-acid chain; its full sequence is Maturase K (507 aa).

The protein belongs to the intron maturase 2 family. MatK subfamily.

Its subcellular location is the plastid. It is found in the chloroplast. Usually encoded in the trnK tRNA gene intron. Probably assists in splicing its own and other chloroplast group II introns. The sequence is that of Maturase K from Humulus lupulus (European hop).